A 561-amino-acid polypeptide reads, in one-letter code: Potassium-transporting ATPase potassium-binding subunit (561 aa).

Transmembrane regions (helical) follow at residues 2–22 (GQGL…TPVL), 66–86 (IRAI…LIYF), 135–155 (ALGF…IAFI), 177–197 (ILLP…VPQT), 253–273 (LIET…YGVF), 280–300 (AWLL…VAAG), 327–347 (FGWA…CGAV), 354–374 (LMPQ…IWGG), 378–398 (GTAY…LMVG), 413–433 (IVLA…PSAI), 482–502 (LSTS…MLLL), and 531–551 (AGIV…LGPI).

The protein belongs to the KdpA family. The system is composed of three essential subunits: KdpA, KdpB and KdpC.

It localises to the cell inner membrane. Part of the high-affinity ATP-driven potassium transport (or Kdp) system, which catalyzes the hydrolysis of ATP coupled with the electrogenic transport of potassium into the cytoplasm. This subunit binds the periplasmic potassium ions and delivers the ions to the membrane domain of KdpB through an intramembrane tunnel. In Nostoc sp. (strain PCC 7120 / SAG 25.82 / UTEX 2576), this protein is Potassium-transporting ATPase potassium-binding subunit.